The following is a 450-amino-acid chain: tRNA modification GTPase MnmE (450 aa).

(6S)-5-formyl-5,6,7,8-tetrahydrofolate is bound by residues Arg21, Glu80, and Lys119. The TrmE-type G domain maps to 213–373 (GIKVVIIGKP…LEEEIIKSVK (161 aa)). Residue Asn223 coordinates K(+). GTP-binding positions include 223 to 228 (NVGKST), 242 to 248 (TDIPGTT), and 267 to 270 (DTAG). Residue Ser227 participates in Mg(2+) binding. K(+) contacts are provided by Thr242, Ile244, and Thr247. Thr248 contributes to the Mg(2+) binding site. Lys450 provides a ligand contact to (6S)-5-formyl-5,6,7,8-tetrahydrofolate.

Belongs to the TRAFAC class TrmE-Era-EngA-EngB-Septin-like GTPase superfamily. TrmE GTPase family. As to quaternary structure, homodimer. Heterotetramer of two MnmE and two MnmG subunits. K(+) is required as a cofactor.

The protein resides in the cytoplasm. Its function is as follows. Exhibits a very high intrinsic GTPase hydrolysis rate. Involved in the addition of a carboxymethylaminomethyl (cmnm) group at the wobble position (U34) of certain tRNAs, forming tRNA-cmnm(5)s(2)U34. This is tRNA modification GTPase MnmE from Pseudothermotoga lettingae (strain ATCC BAA-301 / DSM 14385 / NBRC 107922 / TMO) (Thermotoga lettingae).